The primary structure comprises 125 residues: Fatty acid-binding protein, liver-type (125 aa).

This sequence belongs to the calycin superfamily. Fatty-acid binding protein (FABP) family.

It is found in the cytoplasm. The sequence is that of Fatty acid-binding protein, liver-type (fabp1) from Takifugu rubripes (Japanese pufferfish).